The sequence spans 232 residues: Ubiquinone biosynthesis O-methyltransferase (232 aa).

S-adenosyl-L-methionine contacts are provided by R36, G55, D76, and M120.

This sequence belongs to the methyltransferase superfamily. UbiG/COQ3 family.

It catalyses the reaction a 3-demethylubiquinol + S-adenosyl-L-methionine = a ubiquinol + S-adenosyl-L-homocysteine + H(+). The catalysed reaction is a 3-(all-trans-polyprenyl)benzene-1,2-diol + S-adenosyl-L-methionine = a 2-methoxy-6-(all-trans-polyprenyl)phenol + S-adenosyl-L-homocysteine + H(+). Its pathway is cofactor biosynthesis; ubiquinone biosynthesis. Its function is as follows. O-methyltransferase that catalyzes the 2 O-methylation steps in the ubiquinone biosynthetic pathway. The protein is Ubiquinone biosynthesis O-methyltransferase of Paraburkholderia phymatum (strain DSM 17167 / CIP 108236 / LMG 21445 / STM815) (Burkholderia phymatum).